A 200-amino-acid polypeptide reads, in one-letter code: Small ribosomal subunit protein uS4 (200 aa).

Positions 22–43 (TGKELQKRPYPPGQHGPSQRRK) are disordered. One can recognise an S4 RNA-binding domain in the interval 92-152 (SRLDNLVYRL…EKSRNLQVIK (61 aa)).

The protein belongs to the universal ribosomal protein uS4 family. Part of the 30S ribosomal subunit. Contacts protein S5. The interaction surface between S4 and S5 is involved in control of translational fidelity.

One of the primary rRNA binding proteins, it binds directly to 16S rRNA where it nucleates assembly of the body of the 30S subunit. Functionally, with S5 and S12 plays an important role in translational accuracy. This chain is Small ribosomal subunit protein uS4, found in Geobacillus sp. (strain WCH70).